A 189-amino-acid chain; its full sequence is Putative biopolymer transport protein ExbB-like 1 (189 aa).

3 consecutive transmembrane segments (helical) span residues 14–34 (FVTTLVLVWISLYLVMTLWVF), 99–119 (LVVLSIISSTAPFIGLFGTVV), and 147–167 (LIATAAGILAAIPAYSFYLIL).

Belongs to the ExbB/TolQ family.

Its subcellular location is the cell inner membrane. This is Putative biopolymer transport protein ExbB-like 1 from Helicobacter pylori (strain J99 / ATCC 700824) (Campylobacter pylori J99).